The sequence spans 467 residues: Putative pentatricopeptide repeat-containing protein At1g10330 (467 aa).

PPR repeat units follow at residues 50–84 (TKCVYNTLIRSYLTTGEYKTSLALFTHMLASHVQP), 85–119 (NNLTFPSLIKAACSSFSVSYGVALHGQALKRGFLW), 120–150 (DPFVQTSFVRFYGEVGDLESSRKMFDDILNP), 151–181 (CVVACNSLLDACGRNGEMDYAFEYFQRMPVT), 182–216 (DVVSWTTVINGFSKKGLHAKALMVFGEMIQNERAV), 220–256 (NEATFVSVLSSCANFDQGGIRLGKQIHGYVMSKEIIL), 257–287 (TTTLGTALLDMYGKAGDLEMALTIFDQIRDK), 288–322 (KVCAWNAIISALASNGRPKQALEMFEMMKSSYVHP), 323–358 (NGITLLAILTACARSKLVDLGIQLFSSICSEYKIIP), and 359–389 (TSEHYGCVVDLIGRAGLLVDAANFIQSLPFE). Residues 394-467 (VLGALLGACK…RKIPAYSVLT (74 aa)) are type E motif; degenerate.

The protein belongs to the PPR family. PCMP-E subfamily.

The polypeptide is Putative pentatricopeptide repeat-containing protein At1g10330 (PCMP-E71) (Arabidopsis thaliana (Mouse-ear cress)).